A 290-amino-acid chain; its full sequence is UPF0761 membrane protein Ent638_4092 (290 aa).

Transmembrane regions (helical) follow at residues 44–64 (LLSL…FPMF), 104–124 (VGAC…DSAL), 140–160 (FAVY…SLAI), 183–203 (IFPL…VPTL), 210–230 (AIVG…GFAL), and 244–264 (VLAV…IVLL).

Belongs to the UPF0761 family.

It is found in the cell inner membrane. This chain is UPF0761 membrane protein Ent638_4092, found in Enterobacter sp. (strain 638).